The sequence spans 343 residues: GTPase Obg (343 aa).

Positions 1–159 constitute an Obg domain; the sequence is MQFIDHATIC…RQLRLELKLL (159 aa). Residues 160–328 enclose the OBG-type G domain; that stretch reads AEVGLIGLPN…LLRLVWQWLD (169 aa). Residues 166 to 173, 191 to 195, 213 to 216, 280 to 283, and 309 to 311 each bind GTP; these read GLPNAGKS, FTTLV, DIPG, NKID, and SSA. Residues Ser-173 and Thr-193 each coordinate Mg(2+).

The protein belongs to the TRAFAC class OBG-HflX-like GTPase superfamily. OBG GTPase family. Monomer. Mg(2+) is required as a cofactor.

Its subcellular location is the cytoplasm. Its function is as follows. An essential GTPase which binds GTP, GDP and possibly (p)ppGpp with moderate affinity, with high nucleotide exchange rates and a fairly low GTP hydrolysis rate. Plays a role in control of the cell cycle, stress response, ribosome biogenesis and in those bacteria that undergo differentiation, in morphogenesis control. The polypeptide is GTPase Obg (Synechococcus elongatus (strain ATCC 33912 / PCC 7942 / FACHB-805) (Anacystis nidulans R2)).